The sequence spans 276 residues: Undecaprenyl-diphosphatase (276 aa).

8 consecutive transmembrane segments (helical) span residues 1–21 (MHWL…FLPV), 41–61 (LLLD…VFFA), 97–117 (ALLI…FHKI), 121–141 (LFAS…LLWA), 155–175 (VTWG…LPGI), 200–220 (FLLS…DASA), 231–251 (LGGI…LAIV), and 256–276 (LWWF…ANFV).

It belongs to the UppP family.

It is found in the cell inner membrane. The enzyme catalyses di-trans,octa-cis-undecaprenyl diphosphate + H2O = di-trans,octa-cis-undecaprenyl phosphate + phosphate + H(+). In terms of biological role, catalyzes the dephosphorylation of undecaprenyl diphosphate (UPP). Confers resistance to bacitracin. This Desulfatibacillum aliphaticivorans protein is Undecaprenyl-diphosphatase.